A 365-amino-acid chain; its full sequence is Chorismate synthase (365 aa).

2 residues coordinate NADP(+): arginine 48 and arginine 54. Residues arginine 125–serine 127, asparagine 237–alanine 238, glycine 277, lysine 292–serine 296, and arginine 318 each bind FMN.

The protein belongs to the chorismate synthase family. As to quaternary structure, homotetramer. Requires FMNH2 as cofactor.

The enzyme catalyses 5-O-(1-carboxyvinyl)-3-phosphoshikimate = chorismate + phosphate. It functions in the pathway metabolic intermediate biosynthesis; chorismate biosynthesis; chorismate from D-erythrose 4-phosphate and phosphoenolpyruvate: step 7/7. Functionally, catalyzes the anti-1,4-elimination of the C-3 phosphate and the C-6 proR hydrogen from 5-enolpyruvylshikimate-3-phosphate (EPSP) to yield chorismate, which is the branch point compound that serves as the starting substrate for the three terminal pathways of aromatic amino acid biosynthesis. This reaction introduces a second double bond into the aromatic ring system. This Verminephrobacter eiseniae (strain EF01-2) protein is Chorismate synthase.